Reading from the N-terminus, the 528-residue chain is Na(+)/H(+) antiporter NhaB (528 aa).

The next 10 helical transmembrane spans lie at 11–31 (VNFL…FLVI), 67–87 (PGGL…SQVL), 98–118 (LLLI…LFVF), 140–160 (AFLS…AVGI), 240–260 (FFIR…LTCV), 311–331 (LVAG…SVII), 350–370 (EEAL…GVII), 391–411 (LVVF…VFVG), 449–469 (ATPN…APLI), and 476–496 (MVIM…VTIE).

It belongs to the NhaB Na(+)/H(+) (TC 2.A.34) antiporter family.

It localises to the cell inner membrane. The catalysed reaction is 2 Na(+)(in) + 3 H(+)(out) = 2 Na(+)(out) + 3 H(+)(in). In terms of biological role, na(+)/H(+) antiporter that extrudes sodium in exchange for external protons. In Shewanella denitrificans (strain OS217 / ATCC BAA-1090 / DSM 15013), this protein is Na(+)/H(+) antiporter NhaB.